We begin with the raw amino-acid sequence, 274 residues long: MLSKRIIPCLDCDLQVPEGRVVKGVEFKQIRYAGNPVELATKYYEQGADEIVFLDITASHERRSTMADVIEKTVENVFTPICVGGGIREVKDYVAMLKAGADKCSTNTAAIKDPSLINRASEHVGSQACVIGIDAKRRYVENPSESDEHYIVETNDGYCWFDCSIYGGREFTGIDAVKWAIECEERGAGEILLTSMDRDGTKIGYDLELTKTISENVSIPVIASGGVGNPEHIYDSFSKGKADAALAASIFHFDEYPIPQVKNYLKDKNIPIRI.

Active-site residues include Asp11 and Asp134.

The protein belongs to the HisA/HisF family. Heterodimer of HisH and HisF.

Its subcellular location is the cytoplasm. The catalysed reaction is 5-[(5-phospho-1-deoxy-D-ribulos-1-ylimino)methylamino]-1-(5-phospho-beta-D-ribosyl)imidazole-4-carboxamide + L-glutamine = D-erythro-1-(imidazol-4-yl)glycerol 3-phosphate + 5-amino-1-(5-phospho-beta-D-ribosyl)imidazole-4-carboxamide + L-glutamate + H(+). Its pathway is amino-acid biosynthesis; L-histidine biosynthesis; L-histidine from 5-phospho-alpha-D-ribose 1-diphosphate: step 5/9. Its function is as follows. IGPS catalyzes the conversion of PRFAR and glutamine to IGP, AICAR and glutamate. The HisF subunit catalyzes the cyclization activity that produces IGP and AICAR from PRFAR using the ammonia provided by the HisH subunit. This Methanosphaera stadtmanae (strain ATCC 43021 / DSM 3091 / JCM 11832 / MCB-3) protein is Imidazole glycerol phosphate synthase subunit HisF.